The sequence spans 414 residues: Serine hydroxymethyltransferase (414 aa).

(6S)-5,6,7,8-tetrahydrofolate contacts are provided by residues Leu-121 and 125-127; that span reads GHL. Lys-229 carries the N6-(pyridoxal phosphate)lysine modification.

Belongs to the SHMT family. As to quaternary structure, homodimer. The cofactor is pyridoxal 5'-phosphate.

It localises to the cytoplasm. It carries out the reaction (6R)-5,10-methylene-5,6,7,8-tetrahydrofolate + glycine + H2O = (6S)-5,6,7,8-tetrahydrofolate + L-serine. Its pathway is one-carbon metabolism; tetrahydrofolate interconversion. It participates in amino-acid biosynthesis; glycine biosynthesis; glycine from L-serine: step 1/1. In terms of biological role, catalyzes the reversible interconversion of serine and glycine with tetrahydrofolate (THF) serving as the one-carbon carrier. This reaction serves as the major source of one-carbon groups required for the biosynthesis of purines, thymidylate, methionine, and other important biomolecules. Also exhibits THF-independent aldolase activity toward beta-hydroxyamino acids, producing glycine and aldehydes, via a retro-aldol mechanism. In Polaromonas naphthalenivorans (strain CJ2), this protein is Serine hydroxymethyltransferase.